The following is a 209-amino-acid chain: Large ribosomal subunit protein uL4 (209 aa).

Residues 45–77 (RQGTHKAKERAEVTGSTRKIKKQKGTGTARAGS) form a disordered region.

It belongs to the universal ribosomal protein uL4 family. Part of the 50S ribosomal subunit.

Functionally, one of the primary rRNA binding proteins, this protein initially binds near the 5'-end of the 23S rRNA. It is important during the early stages of 50S assembly. It makes multiple contacts with different domains of the 23S rRNA in the assembled 50S subunit and ribosome. In terms of biological role, forms part of the polypeptide exit tunnel. This is Large ribosomal subunit protein uL4 from Flavobacterium johnsoniae (strain ATCC 17061 / DSM 2064 / JCM 8514 / BCRC 14874 / CCUG 350202 / NBRC 14942 / NCIMB 11054 / UW101) (Cytophaga johnsonae).